The primary structure comprises 914 residues: Linoleate 13S-lipoxygenase 3-1, chloroplastic (914 aa).

A chloroplast-targeting transit peptide spans 1–83 (MALAKEIMGI…PEKAVRFKVR (83 aa)). In terms of domain architecture, PLAT spans 96–218 (LKETIVKHLD…DHPGKRIFFS (123 aa)). The Lipoxygenase domain occupies 221 to 914 (PYLPDETPAG…CRGVPNSVSI (694 aa)). Residues His574, His579, His765, Asn769, and Ile914 each contribute to the Fe cation site.

This sequence belongs to the lipoxygenase family. As to quaternary structure, monomer. Requires Fe cation as cofactor. In terms of tissue distribution, expressed in roots and leaves. Detected in tubers and flower buds.

It localises to the plastid. The protein localises to the chloroplast stroma. The protein resides in the chloroplast thylakoid. It carries out the reaction (9Z,12Z)-octadecadienoate + O2 = (13S)-hydroperoxy-(9Z,11E)-octadecadienoate. The enzyme catalyses (9Z,12Z,15Z)-octadecatrienoate + O2 = (13S)-hydroperoxy-(9Z,11E,15Z)-octadecatrienoate. Its pathway is lipid metabolism; oxylipin biosynthesis. Functionally, plant lipoxygenases may be involved in a number of diverse aspects of plant physiology including growth and development, pest resistance, and senescence or responses to wounding. Required for the regulation of wound-induced gene expression, but is not involved in the bulk production of jasmonate upon wounding. Catalyzes the hydroperoxidation of lipids containing a cis,cis-1,4-pentadiene structure. Linolenic acid is the preferred substrate, before linoleic and arachidonic acids. This Solanum tuberosum (Potato) protein is Linoleate 13S-lipoxygenase 3-1, chloroplastic (LOX3.1).